The following is a 936-amino-acid chain: VPS35 endosomal protein-sorting factor-like (936 aa).

2 disordered regions span residues 43-69 (SKTK…VDPL) and 87-113 (DPAA…VGPD). The span at 51–69 (KGSTSSTSSSSSSSVVDPL) shows a compositional bias: low complexity. Ser265 is subject to Phosphoserine. Residues 672 to 692 (AFVRACVAYCFITIPSLVGIF) traverse the membrane as a helical segment.

This sequence belongs to the VPS35L family. In terms of assembly, component of the heterotrimeric retriever complex formed by VPS26C, VPS29 and VPS35L. Interacts with VPS29. Interacts with COMMD1, CCDC93 and CCDC22; associates with the CCC (COMMD/CCDC22/CCDC93) complex which contains at least COMMD1 (and possibly other COMM domain-containing proteins), CCDC22 and CCDC93. Interacts with WASHC1, WASHC2A and WASHC2C. Interacts with SNX17 and SNX31.

Its subcellular location is the membrane. It localises to the endosome. Its function is as follows. Acts as a component of the retriever complex. The retriever complex is a heterotrimeric complex related to retromer cargo-selective complex (CSC) and essential for retromer-independent retrieval and recycling of numerous cargos such as integrin alpha-5/beta-1 (ITGA5:ITGB1). The recruitment of the retriever complex to the endosomal membrane involves CCC and WASH complexes. In the endosomes, drives the retrieval and recycling of NxxY-motif-containing cargo proteins by coupling to SNX17, a cargo essential for the homeostatic maintenance of numerous cell surface proteins associated with processes that include cell migration, cell adhesion, nutrient supply and cell signaling. Involved in copper-dependent ATP7A trafficking between the trans-Golgi network and vesicles in the cell periphery; the function is proposed to depend on its association with the CCC complex and cooperation with the WASH complex on early endosomes. Seems not to be required for CCC complex stability. The protein is VPS35 endosomal protein-sorting factor-like of Rattus norvegicus (Rat).